The following is a 244-amino-acid chain: 5-oxoprolinase subunit A (244 aa).

It belongs to the LamB/PxpA family. As to quaternary structure, forms a complex composed of PxpA, PxpB and PxpC.

It catalyses the reaction 5-oxo-L-proline + ATP + 2 H2O = L-glutamate + ADP + phosphate + H(+). Functionally, catalyzes the cleavage of 5-oxoproline to form L-glutamate coupled to the hydrolysis of ATP to ADP and inorganic phosphate. This is 5-oxoprolinase subunit A from Salmonella arizonae (strain ATCC BAA-731 / CDC346-86 / RSK2980).